The chain runs to 366 residues: Peroxisomal (S)-2-hydroxy-acid oxidase GLO4 (366 aa).

Residues 1–360 (MEDNLPVNVR…TRSHVMTEGD (360 aa)) form the FMN hydroxy acid dehydrogenase domain. Residue Tyr-27 participates in a 2-oxocarboxylate binding. Residues 80-82 (PTG), Ser-109, 130-132 (QLY), and Thr-158 each bind FMN. Tyr-132 contacts a 2-oxocarboxylate. Arg-167 contributes to the a 2-oxocarboxylate binding site. 2 residues coordinate FMN: Lys-231 and Ser-253. His-255 (proton acceptor) is an active-site residue. Residue Arg-258 coordinates a 2-oxocarboxylate. FMN-binding positions include 286 to 290 (DGGIR) and 309 to 310 (GR). Residues 364 to 366 (SLL) carry the Microbody targeting signal motif.

It belongs to the FMN-dependent alpha-hydroxy acid dehydrogenase family. In terms of assembly, homotetramer. Binds to CATB and CATC; these interactions are disturbed by alpha-hydroxy-2-pyridinemethanesulfonic acid (HPMS) and salicylic acid (SA). The cofactor is FMN.

The protein localises to the peroxisome. The enzyme catalyses a (2S)-2-hydroxycarboxylate + O2 = a 2-oxocarboxylate + H2O2. Its pathway is lipid metabolism; fatty acid metabolism. Oxidase that catalyzes the oxidation of a broad range of 2-hydroxyacids to the corresponding 2-oxoacids, with a reduction of O2 to H2O2. May be involved in a general medium- and long-chain fatty acid catabolic pathway such as alpha-oxidation. The protein is Peroxisomal (S)-2-hydroxy-acid oxidase GLO4 (GLO4) of Oryza sativa subsp. japonica (Rice).